Here is a 370-residue protein sequence, read N- to C-terminus: Aminomethyltransferase (370 aa).

It belongs to the GcvT family. In terms of assembly, the glycine cleavage system is composed of four proteins: P, T, L and H.

The enzyme catalyses N(6)-[(R)-S(8)-aminomethyldihydrolipoyl]-L-lysyl-[protein] + (6S)-5,6,7,8-tetrahydrofolate = N(6)-[(R)-dihydrolipoyl]-L-lysyl-[protein] + (6R)-5,10-methylene-5,6,7,8-tetrahydrofolate + NH4(+). Its function is as follows. The glycine cleavage system catalyzes the degradation of glycine. This chain is Aminomethyltransferase, found in Prochlorococcus marinus (strain MIT 9215).